The following is a 287-amino-acid chain: Ribonuclease Z (287 aa).

Positions 64, 66, 68, 69, 124, 191, and 250 each coordinate Zn(2+). Asp-68 (proton acceptor) is an active-site residue.

The protein belongs to the RNase Z family. Homodimer. The cofactor is Zn(2+).

The catalysed reaction is Endonucleolytic cleavage of RNA, removing extra 3' nucleotides from tRNA precursor, generating 3' termini of tRNAs. A 3'-hydroxy group is left at the tRNA terminus and a 5'-phosphoryl group is left at the trailer molecule.. In terms of biological role, zinc phosphodiesterase, which displays some tRNA 3'-processing endonuclease activity. Probably involved in tRNA maturation, by removing a 3'-trailer from precursor tRNA. The polypeptide is Ribonuclease Z (Pyrobaculum islandicum (strain DSM 4184 / JCM 9189 / GEO3)).